Consider the following 381-residue polypeptide: Secretion apparatus protein BsaZ (381 aa).

4 consecutive transmembrane segments (helical) span residues 28–48 (IVALVVIATGALSAPALVDLT), 80–100 (IAAPFVLLCAAVGALPSLVQS), 134–154 (AVKALLYVGVFAITVRVFADL), and 175–195 (IVLTVRLVLLFLLCALPVLIV). Residues 343-381 (NRGGPPREMPPEATHAPDAHGGDAASGGATSAQAGERNA) form a disordered region. A compositionally biased stretch (low complexity) spans 364–381 (GDAASGGATSAQAGERNA).

The protein belongs to the type III secretion exporter family.

It is found in the cell membrane. In terms of biological role, part of the bsa type III secretion system, is involved in the intracellular replication of invading bacteria inside the host cell. Probably necessary for the lysis of the vacuole membrane and escape into the host cell cytoplasm. The chain is Secretion apparatus protein BsaZ (bsaZ) from Burkholderia thailandensis (strain ATCC 700388 / DSM 13276 / CCUG 48851 / CIP 106301 / E264).